Here is a 373-residue protein sequence, read N- to C-terminus: Phosphoserine aminotransferase (373 aa).

Arg47 provides a ligand contact to L-glutamate. Residues Ala81–Arg82, Trp113, Thr164, Asp185, and Gln208 each bind pyridoxal 5'-phosphate. N6-(pyridoxal phosphate)lysine is present on Lys209. Residue Asn250–Thr251 participates in pyridoxal 5'-phosphate binding.

The protein belongs to the class-V pyridoxal-phosphate-dependent aminotransferase family. SerC subfamily. In terms of assembly, homodimer. Pyridoxal 5'-phosphate is required as a cofactor.

The protein resides in the cytoplasm. It carries out the reaction O-phospho-L-serine + 2-oxoglutarate = 3-phosphooxypyruvate + L-glutamate. The enzyme catalyses 4-(phosphooxy)-L-threonine + 2-oxoglutarate = (R)-3-hydroxy-2-oxo-4-phosphooxybutanoate + L-glutamate. Its pathway is amino-acid biosynthesis; L-serine biosynthesis; L-serine from 3-phospho-D-glycerate: step 2/3. It functions in the pathway cofactor biosynthesis; pyridoxine 5'-phosphate biosynthesis; pyridoxine 5'-phosphate from D-erythrose 4-phosphate: step 3/5. Functionally, catalyzes the reversible conversion of 3-phosphohydroxypyruvate to phosphoserine and of 3-hydroxy-2-oxo-4-phosphonooxybutanoate to phosphohydroxythreonine. The protein is Phosphoserine aminotransferase of Buchnera aphidicola subsp. Baizongia pistaciae (strain Bp).